The following is a 348-amino-acid chain: Neuronal growth regulator 1 (348 aa).

The N-terminal stretch at 1 to 31 (MVLLAQGACCSNQWLAAVLLSLCSCLPAGQS) is a signal peptide. 3 consecutive Ig-like C2-type domains span residues 32–128 (VDFP…VHLT), 133–215 (PKIY…RVVV), and 219–307 (PTIQ…LPLN). Cys54 and Cys112 are joined by a disulfide. N-linked (GlcNAc...) asparagine glycosylation is found at Asn67 and Asn149. Cystine bridges form between Cys154-Cys197 and Cys239-Cys291. A Phosphotyrosine modification is found at Tyr181. N-linked (GlcNAc...) asparagine glycans are attached at residues Asn269, Asn280, Asn288, and Asn301. Gly318 is lipidated: GPI-anchor amidated glycine. A propeptide spans 319-348 (SACDLFSCWSLALTLSSVISIFYLKNAILQ) (removed in mature form).

The protein belongs to the immunoglobulin superfamily. IgLON family. In terms of processing, glycosylated. In terms of tissue distribution, highly expressed in brain.

The protein localises to the cell membrane. May be involved in cell-adhesion. May function as a trans-neural growth-promoting factor in regenerative axon sprouting in the mammalian brain. This chain is Neuronal growth regulator 1 (Negr1), found in Rattus norvegicus (Rat).